Consider the following 445-residue polypeptide: Mitochondrial enolase superfamily member 1 (445 aa).

Substrate is bound by residues Gly-24–Asp-26, Tyr-34, and Lys-220. The Proton donor/acceptor role is filled by Lys-222. Asp-250 is a binding site for Mg(2+). Residues Asn-252, Glu-276, Glu-305, His-355–Gly-357, and Glu-386 contribute to the substrate site. Residues Glu-276 and Glu-305 each contribute to the Mg(2+) site. His-355 is a catalytic residue.

This sequence belongs to the mandelate racemase/muconate lactonizing enzyme family. ENOSF1 subfamily. Mg(2+) serves as cofactor.

Its subcellular location is the mitochondrion. It carries out the reaction L-fuconate = 2-dehydro-3-deoxy-L-fuconate + H2O. Functionally, plays a role in the catabolism of L-fucose, a sugar that is part of the carbohydrates that are attached to cellular glycoproteins. Catalyzes the dehydration of L-fuconate to 2-keto-3-deoxy-L-fuconate by the abstraction of the 2-proton to generate an enediolate intermediate that is stabilized by the magnesium ion. May down-regulate thymidylate synthase activity, possibly already at the RNA level, by promoting the degradation of TYMS mRNA via an antisense RNA-based mechanism. The polypeptide is Mitochondrial enolase superfamily member 1 (enosf1) (Xenopus laevis (African clawed frog)).